A 162-amino-acid polypeptide reads, in one-letter code: MGLETEKADVQLFMDDDAYSRHSGVDYADPEKFGGSGPDRDPHRLNSHLQLGFEDVVAEPVSTHSFDKVWICSHALFEISKYVVYKFLTVFLAIPLAFAAGILFATLSCLHIWIIMPFVKTCLMVLPSVQTVWKTVTDVVIAPLCASVGRSFSSVSLQLSHD.

Topologically, residues 1 to 86 (MGLETEKADV…FEISKYVVYK (86 aa)) are cytoplasmic. Tyr19 is modified (phosphotyrosine; by SRC). Phosphoserine is present on residues Ser20 and Ser23. At Tyr27 the chain carries Phosphotyrosine; by SRC. Ser36 carries the post-translational modification Phosphoserine. The segment at residues 87 to 107 (FLTVFLAIPLAFAAGILFATL) is an intramembrane region (helical). At 108 to 162 (SCLHIWIIMPFVKTCLMVLPSVQTVWKTVTDVVIAPLCASVGRSFSSVSLQLSHD) the chain is on the cytoplasmic side.

The protein belongs to the caveolin family. Monomer or homodimer. Interacts with CAV1; the interaction forms a stable heterooligomeric complex that is required for targeting to lipid rafts and for caveolae formation. Tyrosine phosphorylated forms do not form heterooligomers with the Tyr-19-phosphorylated form existing as a monomer or dimer, and the Tyr-27-form as a monomer only. Interacts (tyrosine phosphorylated form) with the SH2 domain-containing proteins, RASA1, NCK1 and SRC. Interacts (tyrosine phosphorylated form) with INSR, the interaction (Tyr-27-phosphorylated form) is increased on insulin stimulation. Interacts (Tyr-19 phosphorylated form) with MAPK1 (phosphorylated form); the interaction, promoted by insulin, leads to nuclear location and MAPK1 activation. Interacts with STAT3; the interaction is increased on insulin-induced tyrosine phosphorylation leading to STAT activation. Post-translationally, phosphorylated on serine and tyrosine residues. CAV1 promotes phosphorylation on Ser-23 which then targets the complex to the plasma membrane, lipid rafts and caveolae. Phosphorylation on Ser-36 appears to modulate mitosis in endothelial cells. Phosphorylation on both Tyr-19 and Tyr-27 is required for insulin-induced 'Ser-727' phosphorylation of STAT3 and its activation. Phosphorylation on Tyr-19 is required for insulin-induced phosphorylation of MAPK1 and DNA binding of STAT3. Tyrosine phosphorylation is induced by both EGF and insulin (By. similarity).

The protein localises to the nucleus. The protein resides in the cytoplasm. It localises to the golgi apparatus membrane. Its subcellular location is the cell membrane. It is found in the membrane. The protein localises to the caveola. May act as a scaffolding protein within caveolar membranes. Interacts directly with G-protein alpha subunits and can functionally regulate their activity. Acts as an accessory protein in conjunction with CAV1 in targeting to lipid rafts and driving caveolae formation. The Ser-36 phosphorylated form has a role in modulating mitosis in endothelial cells. Positive regulator of cellular mitogenesis of the MAPK signaling pathway. Required for the insulin-stimulated nuclear translocation and activation of MAPK1 and STAT3, and the subsequent regulation of cell cycle progression. The polypeptide is Caveolin-2 (CAV2) (Loxodonta africana (African elephant)).